The sequence spans 90 residues: MSRTVFCARLQKDAEGLDFQLYPGDLGKRIFDNVSKEAWGQWQSKQTMLINEKKLNMMDPEHRKLLETEMVNFLFEGKDVVIDGYTPPSE.

Belongs to the Fe(2+)-trafficking protein family.

Functionally, could be a mediator in iron transactions between iron acquisition and iron-requiring processes, such as synthesis and/or repair of Fe-S clusters in biosynthetic enzymes. The chain is Probable Fe(2+)-trafficking protein from Vibrio atlanticus (strain LGP32) (Vibrio splendidus (strain Mel32)).